Reading from the N-terminus, the 312-residue chain is DNA-directed RNA polymerase subunit alpha (312 aa).

Residues 1–229 (MLQYQIDRVD…ALFQPLATVT (229 aa)) are alpha N-terminal domain (alpha-NTD). Residues 241–312 (SAESQIPLEE…ISLPQSRTTA (72 aa)) are alpha C-terminal domain (alpha-CTD).

Belongs to the RNA polymerase alpha chain family. As to quaternary structure, in cyanobacteria the RNAP catalytic core is composed of 2 alpha, 1 beta, 1 beta', 1 gamma and 1 omega subunit. When a sigma factor is associated with the core the holoenzyme is formed, which can initiate transcription.

The enzyme catalyses RNA(n) + a ribonucleoside 5'-triphosphate = RNA(n+1) + diphosphate. Its function is as follows. DNA-dependent RNA polymerase catalyzes the transcription of DNA into RNA using the four ribonucleoside triphosphates as substrates. This chain is DNA-directed RNA polymerase subunit alpha, found in Synechococcus sp. (strain RCC307).